The primary structure comprises 296 residues: Homoserine kinase (296 aa).

An ATP-binding site is contributed by 86–96 (KAGSGLGSSAA).

Belongs to the GHMP kinase family. Homoserine kinase subfamily.

The protein resides in the cytoplasm. It catalyses the reaction L-homoserine + ATP = O-phospho-L-homoserine + ADP + H(+). Its pathway is amino-acid biosynthesis; L-threonine biosynthesis; L-threonine from L-aspartate: step 4/5. In terms of biological role, catalyzes the ATP-dependent phosphorylation of L-homoserine to L-homoserine phosphate. This Methanocaldococcus jannaschii (strain ATCC 43067 / DSM 2661 / JAL-1 / JCM 10045 / NBRC 100440) (Methanococcus jannaschii) protein is Homoserine kinase (thrB).